A 215-amino-acid polypeptide reads, in one-letter code: Variable small protein 6 (215 aa).

The first 18 residues, 1-18 (MRKRISAIIMTLFMVFMS), serve as a signal peptide directing secretion. A lipid anchor (N-palmitoyl cysteine) is attached at C19. C19 carries the S-diacylglycerol cysteine lipid modification.

This sequence belongs to the variable small protein (Vsp) family.

It localises to the cell outer membrane. Functionally, the Vlp and Vsp proteins are antigenically distinct proteins, only one vlp or vsp gene is transcriptionally active at any one time. Switching between these genes is a mechanism of host immune response evasion. The sequence is that of Variable small protein 6 from Borrelia hermsii.